We begin with the raw amino-acid sequence, 1381 residues long: Hepatocyte growth factor receptor (1381 aa).

An N-terminal signal peptide occupies residues 1 to 24 (MKAPAVLAPGILVLLFTLVQKSDG). Over 25 to 934 (ECKEALVKSE…VQPDQNFTGL (910 aa)) the chain is Extracellular. Positions 27–515 (KEALVKSEMN…TGKKITKIPL (489 aa)) constitute a Sema domain. N-linked (GlcNAc...) asparagine glycosylation is present at Asn45. Cystine bridges form between Cys95/Cys101, Cys98/Cys160, Cys133/Cys141, and Cys172/Cys175. Residue Asn106 is glycosylated (N-linked (GlcNAc...) asparagine). Asn202 and Asn358 each carry an N-linked (GlcNAc...) asparagine glycan. 2 disulfide bridges follow: Cys298-Cys363 and Cys385-Cys397. N-linked (GlcNAc...) asparagine glycosylation is found at Asn399, Asn405, and Asn449. Disulfide bonds link Cys520–Cys538, Cys526–Cys561, Cys529–Cys545, and Cys541–Cys551. N-linked (GlcNAc...) asparagine glycosylation is present at Asn553. IPT/TIG domains are found at residues 563–655 (PTIY…FSYV), 657–739 (PIIT…FSYR), and 742–836 (PIVY…LIYV). Residue Thr582 is glycosylated (O-linked (Man) threonine). N-linked (GlcNAc...) asparagine glycosylation is found at Asn607 and Asn635. Thr676 and Thr761 each carry an O-linked (Man) threonine glycan. N-linked (GlcNAc...) asparagine glycans are attached at residues Asn785, Asn879, and Asn930. A helical transmembrane segment spans residues 935-955 (IVGVVSISIILLLLLGLFLWL). Over 956–1381 (KRRKQIKDLG…QDNVDGEVDT (426 aa)) the chain is Cytoplasmic. Ser966 is modified (phosphoserine). Thr977 is modified (phosphothreonine). 3 positions are modified to phosphoserine: Ser990, Ser997, and Ser1000. Tyr1003 is subject to Phosphotyrosine. The region spanning 1078–1345 (VHFNEVIGRG…RISAIFSTFI (268 aa)) is the Protein kinase domain. Residues 1084–1092 (IGRGHFGCV) and Lys1110 each bind ATP. Asp1204 acts as the Proton acceptor in catalysis. An interaction with RANBP9 region spans residues 1212 to 1381 (LDEKFTVKVA…QDNVDGEVDT (170 aa)). Tyr1230 bears the Phosphotyrosine mark. Phosphotyrosine; by autocatalysis occurs at positions 1234 and 1235. At Thr1289 the chain carries Phosphothreonine. Residues 1320-1359 (WHPKAELRPSFSELVSRISAIFSTFIGEHYVHVNATYVNV) are interaction with MUC20. A phosphotyrosine; by autocatalysis mark is found at Tyr1349 and Tyr1356. Tyr1365 is modified (phosphotyrosine).

This sequence belongs to the protein kinase superfamily. Tyr protein kinase family. As to quaternary structure, heterodimer made of an alpha chain (50 kDa) and a beta chain (145 kDa) which are disulfide linked. Binds PLXNB1. Interacts when phosphorylated with downstream effectors including STAT3, PIK3R1, SRC, PCLG1, GRB2 and GAB1. Interacts with SPSB1, SPSB2 and SPSB4. Interacts with INPP5D/SHIP1. When phosphorylated at Tyr-1356, interacts with INPPL1/SHIP2. Interacts with RANBP9 and RANBP10, as well as SPSB1, SPSB2, SPSB3 and SPSB4. SPSB1 binding occurs in the presence and in the absence of HGF, however HGF treatment has a positive effect on this interaction. Interacts with MUC20; prevents interaction with GRB2 and suppresses hepatocyte growth factor-induced cell proliferation. Interacts with GRB10. Interacts with PTPN1 and PTPN2. Interacts with HSP90AA1 and HSP90AB1; the interaction suppresses MET kinase activity. Interacts with tensin TNS3. Interacts (when phosphorylated) with tensin TNS4 (via SH2 domain); the interaction increases MET protein stability by inhibiting MET endocytosis and subsequent lysosomal degradation. Post-translationally, autophosphorylated in response to ligand binding on Tyr-1234 and Tyr-1235 in the kinase domain leading to further phosphorylation of Tyr-1349 and Tyr-1356 in the C-terminal multifunctional docking site. Dephosphorylated by PTPRJ at Tyr-1349 and Tyr-1365. Dephosphorylated by PTPN1 and PTPN2. In terms of processing, ubiquitinated. Ubiquitination by CBL regulates the receptor stability and activity through proteasomal degradation. O-mannosylation of IPT/TIG domains by TMEM260 is required for protein maturation. O-mannosylated residues are composed of single mannose glycans that are not elongated or modified.

The protein resides in the membrane. The enzyme catalyses L-tyrosyl-[protein] + ATP = O-phospho-L-tyrosyl-[protein] + ADP + H(+). In its inactive state, the C-terminal tail interacts with the catalytic domain and inhibits the kinase activity. Upon ligand binding, the C-terminal tail is displaced and becomes phosphorylated, thus increasing the kinase activity. Receptor tyrosine kinase that transduces signals from the extracellular matrix into the cytoplasm by binding to hepatocyte growth factor/HGF ligand. Regulates many physiological processes including proliferation, scattering, morphogenesis and survival. Ligand binding at the cell surface induces autophosphorylation of MET on its intracellular domain that provides docking sites for downstream signaling molecules. Following activation by ligand, interacts with the PI3-kinase subunit PIK3R1, PLCG1, SRC, GRB2, STAT3 or the adapter GAB1. Recruitment of these downstream effectors by MET leads to the activation of several signaling cascades including the RAS-ERK, PI3 kinase-AKT, or PLCgamma-PKC. The RAS-ERK activation is associated with the morphogenetic effects while PI3K/AKT coordinates prosurvival effects. During embryonic development, MET signaling plays a role in gastrulation, development and migration of muscles and neuronal precursors, angiogenesis and kidney formation. In adults, participates in wound healing as well as organ regeneration and tissue remodeling. Also promotes differentiation and proliferation of hematopoietic cells. The polypeptide is Hepatocyte growth factor receptor (MET) (Equus caballus (Horse)).